The chain runs to 114 residues: Nucleoid-associated protein Tlet_0999 (114 aa).

The protein belongs to the YbaB/EbfC family. As to quaternary structure, homodimer.

The protein localises to the cytoplasm. The protein resides in the nucleoid. Binds to DNA and alters its conformation. May be involved in regulation of gene expression, nucleoid organization and DNA protection. This Pseudothermotoga lettingae (strain ATCC BAA-301 / DSM 14385 / NBRC 107922 / TMO) (Thermotoga lettingae) protein is Nucleoid-associated protein Tlet_0999.